A 374-amino-acid polypeptide reads, in one-letter code: Organelle RRM domain-containing protein 1, chloroplastic (374 aa).

The transit peptide at 1–54 (MEALIASTSFFVPISNSSSSHIINNRFFPSFYSPNLNFGTFRKTSLSSSHLVFS) directs the protein to the chloroplast. Over residues 258 to 271 (KDYEGDSTQDSRDQ) the composition is skewed to basic and acidic residues. The disordered stretch occupies residues 258–279 (KDYEGDSTQDSRDQDDSESPPV). Residues 282 to 360 (KKLFITGLSF…WMIVVDVAKT (79 aa)) form the RRM domain.

As to quaternary structure, interacts with PCMP-H51/CRR28 and PCMP-H12/OTP82. Interacts with MORF8/RIP1, MORF2/RIP2 and VAR3/OZ1.

The protein resides in the plastid. Its subcellular location is the chloroplast. Functionally, involved in C-to-U editing of chloroplastic RNA. Functions as major chloroplastic editing factor. Controls 62 percent of the chloroplastic editing sites. Binds RNA close to ORRM1-dependent editing sites in vitro. Binds the editing recognition trans-factors PCMP-H51/CRR28 and PCMP-H12/OTP82. This is Organelle RRM domain-containing protein 1, chloroplastic from Arabidopsis thaliana (Mouse-ear cress).